Here is a 94-residue protein sequence, read N- to C-terminus: Small ribosomal subunit protein bS6 (94 aa).

Belongs to the bacterial ribosomal protein bS6 family.

Functionally, binds together with bS18 to 16S ribosomal RNA. The sequence is that of Small ribosomal subunit protein bS6 from Desulforudis audaxviator (strain MP104C).